A 179-amino-acid polypeptide reads, in one-letter code: UPF0227 protein SO_2251 (179 aa).

It belongs to the UPF0227 family.

In Shewanella oneidensis (strain ATCC 700550 / JCM 31522 / CIP 106686 / LMG 19005 / NCIMB 14063 / MR-1), this protein is UPF0227 protein SO_2251.